A 485-amino-acid polypeptide reads, in one-letter code: Ribulose bisphosphate carboxylase large chain (485 aa).

Residues 1–2 constitute a propeptide that is removed on maturation; it reads MS. An N-acetylproline modification is found at P3. K14 is subject to N6,N6,N6-trimethyllysine. 2 residues coordinate substrate: N123 and T173. Residue K175 is the Proton acceptor of the active site. K177 contacts substrate. Mg(2+) contacts are provided by K201, D203, and E204. Residue K201 is modified to N6-carboxylysine. H294 acts as the Proton acceptor in catalysis. Positions 295, 327, and 379 each coordinate substrate.

It belongs to the RuBisCO large chain family. Type I subfamily. As to quaternary structure, heterohexadecamer of 8 large chains and 8 small chains; disulfide-linked. The disulfide link is formed within the large subunit homodimers. It depends on Mg(2+) as a cofactor. The disulfide bond which can form in the large chain dimeric partners within the hexadecamer appears to be associated with oxidative stress and protein turnover.

It is found in the plastid. The protein resides in the chloroplast. It catalyses the reaction 2 (2R)-3-phosphoglycerate + 2 H(+) = D-ribulose 1,5-bisphosphate + CO2 + H2O. It carries out the reaction D-ribulose 1,5-bisphosphate + O2 = 2-phosphoglycolate + (2R)-3-phosphoglycerate + 2 H(+). RuBisCO catalyzes two reactions: the carboxylation of D-ribulose 1,5-bisphosphate, the primary event in carbon dioxide fixation, as well as the oxidative fragmentation of the pentose substrate in the photorespiration process. Both reactions occur simultaneously and in competition at the same active site. The chain is Ribulose bisphosphate carboxylase large chain from Flaveria bidentis (Coastal plain yellowtops).